Consider the following 210-residue polypeptide: Chaperone protein TorD (210 aa).

The protein belongs to the TorD/DmsD family. TorD subfamily.

It is found in the cytoplasm. Functionally, involved in the biogenesis of TorA. Acts on TorA before the insertion of the molybdenum cofactor and, as a result, probably favors a conformation of the apoenzyme that is competent for acquiring the cofactor. The polypeptide is Chaperone protein TorD (Salmonella schwarzengrund (strain CVM19633)).